Reading from the N-terminus, the 155-residue chain is Myelin basic protein (155 aa).

Residues 1-72 (MASATTSDHA…HQGARRQTDD (72 aa)) are disordered. Alanine 2 carries the N-acetylalanine; in forms C1, C2, C3 and C8 modification. Glutamine 12 carries the post-translational modification Deamidated glutamine; in forms C1, C2 and C3. The segment covering 37-49 (GSRKVPEKGKEPA) has biased composition (basic and acidic residues). Phosphoserine; in forms C1, C2 and C3 is present on residues serine 73 and serine 84. The tract at residues 113–155 (RAHYGAAGSSKSKDGFRGRRDGSGTLSSFFKMGKKGEGSPARR) is disordered. Residues serine 121 and serine 122 each carry the phosphoserine; in forms C1 and C3 modification. The segment covering 123-134 (KSKDGFRGRRDG) has biased composition (basic and acidic residues). Residues serine 135, serine 139, and serine 140 each carry the phosphoserine; in forms C1, C2 and C3 modification.

It belongs to the myelin basic protein family. Several charge isomers are produced as a result of optional post-translational modifications, such as phosphorylation, deamidation and citrullination. Dogfish MBP contains four major components designated as C1, C2, C3 and C8. C1 and C3, but not C2 are phosphorylated at either Ser-121 or Ser-122; C2 is phosphorylated at 2 or 3 sites among Ser-135, Ser-139 and Ser-140. Hydroxyproline and citrulline are present but were not identified in either C1, C2 or C3, which suggests their presence in C8.

The protein localises to the myelin membrane. In terms of biological role, this protein may function to maintain proper structure of myelin. The polypeptide is Myelin basic protein (MBP) (Squalus acanthias (Spiny dogfish)).